The following is a 61-amino-acid chain: MKVSQVFISAISVFGLATSVNAQNASNTTSNAAPALHAQNGQLLNAGVVGAAVGGALAFLI.

The signal sequence occupies residues 1–22; that stretch reads MKVSQVFISAISVFGLATSVNA. Residues N24 and N27 are each glycosylated (N-linked (GlcNAc...) asparagine).

The protein to yeast HOR7.

Its function is as follows. May play an important role in the response of cells to diverse environmental stresses. The polypeptide is Protein DDR2 (DDR2) (Saccharomyces cerevisiae (strain ATCC 204508 / S288c) (Baker's yeast)).